Consider the following 141-residue polypeptide: Cell division protein SepF (141 aa).

This sequence belongs to the SepF family. In terms of assembly, homodimer. Interacts with FtsZ.

The protein localises to the cytoplasm. In terms of biological role, cell division protein that is part of the divisome complex and is recruited early to the Z-ring. Probably stimulates Z-ring formation, perhaps through the cross-linking of FtsZ protofilaments. Its function overlaps with FtsA. This is Cell division protein SepF from Anoxybacillus flavithermus (strain DSM 21510 / WK1).